Consider the following 157-residue polypeptide: Transcription factor HES-2 (157 aa).

Positions 13-70 (LRKSLKPLLEKRRRARINESLSQLKGLVLPLLGAETSRYSKLEKADILEMTVRFLREQ) constitute a bHLH domain. One can recognise an Orange domain in the interval 86 to 119 (YLEGYRACLARLARVLPACSVLEPAVSARLLEHL). Residues 124-157 (VSGGPPSLTPASASAPAPSPPVPPPSSLGLWRPW) are disordered. Residues 125 to 139 (SGGPPSLTPASASAP) show a composition bias toward low complexity. Pro residues predominate over residues 140 to 149 (APSPPVPPPS). The short motif at 154 to 157 (WRPW) is the WRPW motif element.

Transcription repression requires formation of a complex with a corepressor protein of the Groucho/TLE family.

It is found in the nucleus. Functionally, transcriptional repressor of genes that require a bHLH protein for their transcription. This Rattus norvegicus (Rat) protein is Transcription factor HES-2 (Hes2).